The primary structure comprises 646 residues: Lipoteichoic acid synthase (646 aa).

Residues 1–7 (MSLPKKK) lie on the Cytoplasmic side of the membrane. Residues 8-28 (IGIFAFFLLTVFTITLKTYFS) form a helical membrane-spanning segment. Residues 29–43 (YYVDFSLGVKGLVQN) are Extracellular-facing. Residues 44–64 (LILLMNPYSLIALVLSVFLFF) traverse the membrane as a helical segment. Topologically, residues 65-68 (KGKK) are cytoplasmic. A helical membrane pass occupies residues 69-89 (AFWFIFIGGFLLTFLLYANVV). Over 90 to 119 (YFRFFSDFLTFSTLNQAGNVESMGGAVSAS) the chain is Extracellular. The helical transmembrane segment at 120–140 (FKWYDFVYFIDTIIYLAILIF) threads the bilayer. Residues 141-153 (KRKWLDNRAFSKK) lie on the Cytoplasmic side of the membrane. Residues 154–174 (FVPVVMATSVALFFLNLAFAE) traverse the membrane as a helical segment. The Extracellular portion of the chain corresponds to 175–646 (TDRPELLTRT…KSGPKGNEKK (472 aa)). Residues Glu255 and Thr300 each contribute to the Mn(2+) site. The active site involves Thr300. His416 lines the substrate pocket. Mn(2+)-binding residues include Asp475 and His476.

The protein belongs to the LTA synthase family. Post-translationally, proteolytically cleaved.

The protein localises to the cell membrane. Its subcellular location is the secreted. It participates in cell wall biogenesis; lipoteichoic acid biosynthesis. Its function is as follows. Catalyzes the polymerization of lipoteichoic acid (LTA) polyglycerol phosphate, a reaction that presumably uses phosphatidylglycerol (PG) as substrate. Is required for staphylococcal growth and cell division process. In Staphylococcus epidermidis (strain ATCC 35984 / DSM 28319 / BCRC 17069 / CCUG 31568 / BM 3577 / RP62A), this protein is Lipoteichoic acid synthase (ltaS).